Consider the following 389-residue polypeptide: Putative DNA processing protein DprA (389 aa).

This sequence belongs to the DprA/Smf family.

Functionally, may help load RecA onto ssDNA. This is Putative DNA processing protein DprA from Mycobacterium tuberculosis (strain CDC 1551 / Oshkosh).